Consider the following 1125-residue polypeptide: Transient receptor potential cation channel subfamily A member 1 (1125 aa).

Residues 1–721 lie on the Cytoplasmic side of the membrane; the sequence is MKRSLRRVLR…KWCAYGFRAH (721 aa). 9 ANK repeats span residues 63-94, 98-127, 131-161, 165-194, 198-227, 239-268, 272-301, 309-338, and 342-371; these read ENLCLLHHAAAEGQVELMQLIINGSSCEALNV, YGNTPLHWAAEKNQVESVKFLLSQGANPNL, NMMAPLHIAVQGMYNEVIKVLTEHKATNINL, NGNTALMSTCAKDNSEALQILLEKGAKLCK, WGDYPVHQAAFSGAKRCMELILAYGEKTGY, KKASPLHLAVQSGDLDMIKMCLDSGAHIDM, AKCMALHFAATQGATDIVKLMISSYTGSSD, NQETLLHRASLFDHHDLADYLISVGADINS, and EGRSPLILATASASWNIVNLLLSKGAKVDI. 5 disulfide bridges follow: C193–C666, C463–C666, C609–C622, C622–C666, and C634–C859. Position 395 is a 4-hydroxyproline; transient (P395). ANK repeat units lie at residues 413-442, 446-475, 482-511, 514-543, and 548-577; these read DGCTPLHYACRQGAPVSVNNLLRFNVSVHS, DKKSPLHFAASYGRINTCQRLLQDISDTRL, HGMTPLHLAAKNGHDKVVQLLLKKGALFLS, NGWTALHHASMGGYTQTMKVILDTNLKCTD, and EGNTALHFAAREGHAKAVAMLLSYNADILL. Positions 415 and 422 each coordinate (E)-cinnamaldehyde. Residue C622 participates in (E)-cinnamaldehyde binding. C634 is modified (cysteine sulfenic acid (-SOH); transient; in hyperoxia). Positions 642, 666, and 712 each coordinate (E)-cinnamaldehyde. A helical transmembrane segment spans residues 722–742; that stretch reads MMNLGSYCLGLIPMTLLVVKI. The Extracellular segment spans residues 743 to 767; that stretch reads QPGMAFNSTGIINETISTHEERINT. N-linked (GlcNAc...) asparagine glycans are attached at residues N749 and N755. Residues 768-788 form a helical membrane-spanning segment; it reads LNSFPLKICMILVFLSSIFGY. At 789–806 the chain is on the cytoplasmic side; that stretch reads CKEVVQIFQQKRNYFLDY. Residues E791, Q794, N808, and E811 each contribute to the Ca(2+) site. Residues 807 to 827 traverse the membrane as a helical segment; sequence NNALEWVIYTTSMIFVLPLFL. Topologically, residues 828-832 are extracellular; the sequence is DIPAY. Residues 833–853 traverse the membrane as a helical segment; that stretch reads MQWQCGAIAIFFYWMNFLLYL. At 854 to 876 the chain is on the cytoplasmic side; it reads QRFENCGIFIVMLEVIFKTLLRS. Cysteine sulfenic acid (-SOH); transient; in hyperoxia is present on C859. The helical transmembrane segment at 877–897 threads the bilayer; the sequence is TGVFIFLLLAFGLSFYVLLNF. Residues 898-904 are Extracellular-facing; the sequence is QDAFSTP. Residues 905–925 constitute an intramembrane region (pore-forming); that stretch reads LLSLIQTFSMMLGDINYRDAF. Residues 926 to 937 are Extracellular-facing; it reads LEPLFRNELAYP. Residues 938–959 traverse the membrane as a helical segment; the sequence is VLTFGQLIAFTMFVPIVLMNLL. Residues 960-1125 lie on the Cytoplasmic side of the membrane; it reads IGLAVGDIAE…THCSISHPDI (166 aa). Residues 1044–1073 are a coiled coil; sequence MEILKQKYRLKDLTSLLEKQHELIKLIIQK. 1048 to 1054 contacts a 1,2-diacyl-sn-glycero-3-phospho-(1D-myo-inositol); sequence KQKYRLK.

The protein belongs to the transient receptor (TC 1.A.4) family. As to quaternary structure, homotetramer. Interacts with TMEM100. Interacts with EGLN1. Interacts with the scorpion wasabi receptor toxin at the same site that electrophiles but in a non-covalent manner. In terms of processing, TRPA1 activation by electrophiles occurs though covalent modification of specific cysteine residues in the N-terminal cytoplasmic domain. Post-translationally, hydroxylation is required for TRPA1 activity inhibition in normoxia. In hypoxia, the decrease in oxygen concentration diminishes the activity of the hydroxylase EGLN1, thus relieving TRPA1 from inhibition and ultimately leading to channel activation. Oxidation of Cys-634 and Cys-859 in hyperoxia may override the hydroxylase EGLN1-mediated inhibition, causing TRPA1 activation. As to expression, specifically expressed in a subset of nociceptive neurons. Expressed in dorsal root ganglia.

The protein resides in the cell membrane. It catalyses the reaction Ca(2+)(in) = Ca(2+)(out). The enzyme catalyses Mg(2+)(in) = Mg(2+)(out). The catalysed reaction is Na(+)(in) = Na(+)(out). It carries out the reaction K(+)(in) = K(+)(out). It catalyses the reaction Zn(2+)(in) = Zn(2+)(out). Electrophilic ligands activate the channel by covalent modification of intracellular cysteines; Cys-622 plays a key role in covalent binding of electrophiles. Extracellular Ca(2+) both potentiates and inactivates TRPA1; a rapid potentiation follows by slow desensitization. Activated by increase in intracellular Ca(2+) concentration. Inhibited by ruthenium red, a potent blocker of TRPV channels and selectively by A-967079. Activated by benzyl isothiocyanate (BITC), iodoacetamide, sulfhydryl reactive agent MTSEA, N-methyl maleimide (NMM), N-ethylmaleimide (NEM), and 2-aminoethyldiphenylborinate (2-APB). Also activated by hyperoxia. Acivated by intracellular Zn(2+). TRPA1 activation may critically depend on the presence of small intracellular compounds such as polyphosphates. In terms of biological role, ligand-activated Ca(2+)-permeable, nonselective cation channel. Involved in pain detection and possibly also in cold perception, oxygen concentration perception, cough, itch, and inner ear function. Has a relatively high Ca(2+) selectivity, with a preference for divalent over monovalent cations (Ca(2+) &gt; Ba(2+) &gt; Mg(2+) &gt; NH4(+) &gt; Li(+) &gt; K(+)), the influx of cation into the cytoplasm, leads to membrane depolarization. Has a central role in the pain response to endogenous inflammatory mediators, such as bradykinin and to a diverse array of irritants. Activated by a large variety of structurally unrelated electrophilic and non-electrophilic chemical compounds, such as allylthiocyanate (AITC) from mustard oil or wasabi, cinnamaldehyde, diallyl disulfide (DADS) from garlic, and acrolein, an environmental irritant. Electrophilic ligands activate TRPA1 by interacting with critical N-terminal Cys residues in a covalent manner. Non-electrophile agonists bind at distinct sites in the transmembrane domain to promote channel activation. Also acts as an ionotropic cannabinoid receptor by being activated by delta(9)-tetrahydrocannabinol (THC), the psychoactive component of marijuana. May be a component for the mechanosensitive transduction channel of hair cells in inner ear, thereby participating in the perception of sounds. In Rattus norvegicus (Rat), this protein is Transient receptor potential cation channel subfamily A member 1.